The following is a 272-amino-acid chain: Insulin-like growth factor-binding protein 1 (272 aa).

Positions 1–25 (MPEFLTVVSWPFLILLSFQVRVVAG) are cleaved as a signal peptide. In terms of domain architecture, IGFBP N-terminal spans 28 to 109 (QPWHCAPCTA…TRGQGACVLE (82 aa)). 6 cysteine pairs are disulfide-bonded: C32/C59, C35/C61, C43/C62, C50/C65, C73/C86, and C80/C106. A disordered region spans residues 115 to 143 (TSSLSGSQHEEAKAAVASEDELAESPEMT). Acidic residues predominate over residues 132–143 (SEDELAESPEMT). A phosphoserine mark is found at S139, S157, and S169. T170 bears the Phosphothreonine mark. Phosphotyrosine is present on Y171. One can recognise a Thyroglobulin type-1 domain in the interval 186–264 (KEPCQRELYK…SLETRGDPNC (79 aa)). Intrachain disulfides connect C189–C219, C230–C241, and C243–C264. Position 255 is a phosphoserine (S255). Positions 259-261 (RGD) match the Cell attachment site motif.

As to quaternary structure, binds equally well IGF1 and IGF2. Interacts with integrin ITGA5:ITGB1. Interacts with VHL; this interaction inhibits HIF1A degradation.

Its subcellular location is the secreted. In terms of biological role, multifunctional protein that plays a critical role in regulating the availability of IGFs such as IGF1 and IGF2 to their receptors and thereby regulates IGF-mediated cellular processes including cell migration, proliferation, differentiation or apoptosis in a cell-type specific manner. Also plays a positive role in cell migration by interacting with integrin ITGA5:ITGB1 through its RGD motif. Mechanistically, binding to integrins leads to activation of focal adhesion kinase/PTK2 and stimulation of the mitogen-activated protein kinase (MAPK) pathway. Regulates cardiomyocyte apoptosis by suppressing HIF-1alpha/HIF1A ubiquitination and subsequent degradation. In Rattus norvegicus (Rat), this protein is Insulin-like growth factor-binding protein 1 (Igfbp1).